Here is a 140-residue protein sequence, read N- to C-terminus: Large ribosomal subunit protein uL13 (140 aa).

Part of the 50S ribosomal subunit.

Functionally, this protein is one of the early assembly proteins of the 50S ribosomal subunit, although it is not seen to bind rRNA by itself. It is important during the early stages of 50S assembly. The protein is Large ribosomal subunit protein uL13 of Thermus thermophilus (strain ATCC 27634 / DSM 579 / HB8).